We begin with the raw amino-acid sequence, 182 residues long: Protein Syd (182 aa).

This sequence belongs to the Syd family.

The protein resides in the cell inner membrane. Functionally, interacts with the SecY protein in vivo. May bind preferentially to an uncomplexed state of SecY, thus functioning either as a chelating agent for excess SecY in the cell or as a regulatory factor that negatively controls the translocase function. The protein is Protein Syd of Aeromonas salmonicida (strain A449).